The chain runs to 609 residues: Tyrosyl-DNA phosphodiesterase 1 (609 aa).

Residues 1–12 (MSQESSYGKWTI) show a composition bias toward polar residues. The disordered stretch occupies residues 1-155 (MSQESSYGKW…YETSGEGQDI (155 aa)). S61 bears the Phosphoserine mark. The span at 105 to 118 (QPKRVLPQEKKHVS) shows a compositional bias: basic and acidic residues. Phosphoserine is present on residues S119 and S132. A Phosphothreonine modification is found at T148. S149 carries the post-translational modification Phosphoserine. H264 serves as the catalytic Nucleophile. Position 266 (K266) interacts with substrate. The segment at 401 to 404 (SIGS) is interaction with DNA. The active-site Proton donor/acceptor is the H494. Position 496 (K496) interacts with substrate.

It belongs to the tyrosyl-DNA phosphodiesterase family. Monomer. Ubiquitous.

The protein localises to the nucleus. It is found in the cytoplasm. In terms of biological role, DNA repair enzyme that can remove a variety of covalent adducts from DNA through hydrolysis of a 3'-phosphodiester bond, giving rise to DNA with a free 3' phosphate. Catalyzes the hydrolysis of dead-end complexes between DNA and the topoisomerase I active site tyrosine residue. Hydrolyzes 3'-phosphoglycolates on protruding 3' ends on DNA double-strand breaks due to DNA damage by radiation and free radicals. Acts on blunt-ended double-strand DNA breaks and on single-stranded DNA. Has low 3'exonuclease activity and can remove a single nucleoside from the 3'end of DNA and RNA molecules with 3'hydroxyl groups. Has no exonuclease activity towards DNA or RNA with a 3'phosphate. This chain is Tyrosyl-DNA phosphodiesterase 1 (Tdp1), found in Mus musculus (Mouse).